A 64-amino-acid polypeptide reads, in one-letter code: Palmitoyl-CoA hydrolase (64 aa).

It belongs to the type-B carboxylesterase/lipase family. As to quaternary structure, monomer and homotrimer.

The protein resides in the microsome. The protein localises to the endoplasmic reticulum. It carries out the reaction hexadecanoyl-CoA + H2O = hexadecanoate + CoA + H(+). Hydrolysis of a variety of CoA thioesters of long-chain fatty acids. In Rattus norvegicus (Rat), this protein is Palmitoyl-CoA hydrolase.